Reading from the N-terminus, the 784-residue chain is Transcription factor kayak (784 aa).

3 stretches are compositionally biased toward low complexity: residues 97-106 (QPTQSAYQQQ), 115-126 (NNNNNSNNNANM), and 198-227 (QQQQ…QQQQ). Disordered regions lie at residues 97–126 (QPTQ…NANM), 196–231 (YNQQ…HLPT), 358–404 (PGSD…GNGS), and 421–464 (SGRG…KRRI). Residues 365–378 (SNGSWNEGQLNDDQ) are compositionally biased toward polar residues. Residues 380-397 (TTDTSSAATDSTSYQNGG) are compositionally biased toward low complexity. The span at 421–438 (SGRGSGLAANSTTSNSAT) shows a compositional bias: polar residues. In terms of domain architecture, bZIP spans 459–522 (EEKRRIRRER…SQLEYVLQTH (64 aa)). Residues 461-463 (KRR) are basic motif. A leucine-zipper region spans residues 464-471 (IRRERNKL). Ser-594 carries the post-translational modification Phosphoserine. Disordered stretches follow at residues 616-635 (QDGA…TPAK) and 759-784 (PTCS…LVSL).

Belongs to the bZIP family. Fos subfamily. In terms of assembly, homodimer. Heterodimer with Jra. The kay-Jra heterodimer binds more stably to the AP-1 site than either of the two proteins alone.

Its subcellular location is the nucleus. Its function is as follows. Developmentally regulated transcription factor AP-1 binds and recognizes the enhancer DNA sequence: 5'-TGA[CG]TCA-3'. May play a role in the function or determination of a particular subset of cells in the developing embryo. It is able to carry out its function either independently of or in conjunction with Jra. In Drosophila mojavensis (Fruit fly), this protein is Transcription factor kayak.